The chain runs to 446 residues: N-succinylarginine dihydrolase (446 aa).

Residues 19 to 28 (AGLSFGNVAS), Asn-110, and 137 to 138 (HR) contribute to the substrate site. Residue Glu-174 is part of the active site. Arg-213 contacts substrate. His-249 is a catalytic residue. Residues Asp-251 and Asn-364 each coordinate substrate. Catalysis depends on Cys-370, which acts as the Nucleophile.

Belongs to the succinylarginine dihydrolase family. As to quaternary structure, homodimer.

It catalyses the reaction N(2)-succinyl-L-arginine + 2 H2O + 2 H(+) = N(2)-succinyl-L-ornithine + 2 NH4(+) + CO2. It participates in amino-acid degradation; L-arginine degradation via AST pathway; L-glutamate and succinate from L-arginine: step 2/5. In terms of biological role, catalyzes the hydrolysis of N(2)-succinylarginine into N(2)-succinylornithine, ammonia and CO(2). In Burkholderia ambifaria (strain MC40-6), this protein is N-succinylarginine dihydrolase.